A 402-amino-acid chain; its full sequence is Multidrug resistance protein MdtH (402 aa).

A run of 11 helical transmembrane segments spans residues 13-33, 34-54, 99-116, 139-159, 165-185, 214-234, 243-263, 277-297, 300-320, 340-360, and 368-388; these read YFLL…FPLI, SIRF…ALGL, PWVL…GTLF, LLMM…SWLL, LVCS…AWYL, VLTL…LPIM, AAVK…LYPI, LMAG…TSSL, LFTL…ARET, LGLA…FDAG, and LPWL…WWQF.

This sequence belongs to the major facilitator superfamily. DHA1 family. MdtH (TC 2.A.1.2.21) subfamily.

The protein localises to the cell inner membrane. The polypeptide is Multidrug resistance protein MdtH (Klebsiella pneumoniae (strain 342)).